Consider the following 32-residue polypeptide: Kappa-conotoxin SrXIA (32 aa).

4 disulfides stabilise this stretch: Cys-1–Cys-15, Cys-8–Cys-20, Cys-14–Cys-24, and Cys-19–Cys-28. 2 positions are modified to 4-carboxyglutamate: Glu-9 and Glu-10. Pro-32 is subject to Proline amide.

Belongs to the conotoxin I2 superfamily. In terms of tissue distribution, expressed by the venom duct.

It is found in the secreted. Its function is as follows. Kappa-conotoxins bind and inhibit voltage-gated potassium channels. This toxin inhibits Kv1.2/KCNA2 and Kv1.6/KCNA6. Produces stiffening of body, limbs and tail when injected intracranially into mice. The polypeptide is Kappa-conotoxin SrXIA (Conus spurius (Alphabet cone)).